A 336-amino-acid polypeptide reads, in one-letter code: tRNA N6-adenosine threonylcarbamoyltransferase (336 aa).

Residues H111 and H115 each coordinate Fe cation. Substrate contacts are provided by residues 134-138, D167, G180, and N271; that span reads LVSGG. Residue D299 participates in Fe cation binding.

It belongs to the KAE1 / TsaD family. The cofactor is Fe(2+).

Its subcellular location is the cytoplasm. The catalysed reaction is L-threonylcarbamoyladenylate + adenosine(37) in tRNA = N(6)-L-threonylcarbamoyladenosine(37) in tRNA + AMP + H(+). Functionally, required for the formation of a threonylcarbamoyl group on adenosine at position 37 (t(6)A37) in tRNAs that read codons beginning with adenine. Is involved in the transfer of the threonylcarbamoyl moiety of threonylcarbamoyl-AMP (TC-AMP) to the N6 group of A37, together with TsaE and TsaB. TsaD likely plays a direct catalytic role in this reaction. This is tRNA N6-adenosine threonylcarbamoyltransferase from Thioalkalivibrio sulfidiphilus (strain HL-EbGR7).